The following is a 239-amino-acid chain: MICOS complex subunit mic25a (239 aa).

Glycine 2 carries N-myristoyl glycine lipidation. Disordered stretches follow at residues 27 to 88 (VKLS…KKRY) and 113 to 133 (DISR…ERAK). The segment covering 50 to 78 (NKENQGHQTRTPSTSDAQAPKTQAKTTFP) has biased composition (polar residues). The segment covering 79–88 (DSKEELKKRY) has biased composition (basic and acidic residues). Residues 79-166 (DSKEELKKRY…ITQLEKKNEE (88 aa)) are a coiled coil. One can recognise a CHCH domain in the interval 192–234 (EPVCLNLQAQILNCYRENREQTLQCSDLAKEYMQCINAAKKNL). 2 consecutive short sequence motifs (cx9C motif) follow at residues 195 to 205 (CLNLQAQILNC) and 216 to 226 (CSDLAKEYMQC). 2 disulfide bridges follow: cysteine 195–cysteine 226 and cysteine 205–cysteine 216.

This sequence belongs to the MICOS complex subunit Mic19 family. Metazoan Mic25 subfamily. As to quaternary structure, component of the mitochondrial contact site and cristae organizing system (MICOS) complex (also known as MINOS or MitOS complex).

The protein resides in the mitochondrion inner membrane. Its function is as follows. Component of the MICOS complex, a large protein complex of the mitochondrial inner membrane that plays crucial roles in the maintenance of crista junctions, inner membrane architecture, and formation of contact sites to the outer membrane. The chain is MICOS complex subunit mic25a (chchd6a) from Danio rerio (Zebrafish).